The following is a 564-amino-acid chain: NAD-dependent malic enzyme (564 aa).

Catalysis depends on tyrosine 102, which acts as the Proton donor. Arginine 155 contacts NAD(+). Residue lysine 173 is the Proton acceptor of the active site. Residues glutamate 244, aspartate 245, and aspartate 268 each coordinate a divalent metal cation. NAD(+) contacts are provided by aspartate 268 and asparagine 417.

It belongs to the malic enzymes family. As to quaternary structure, homotetramer. The cofactor is Mg(2+). Requires Mn(2+) as cofactor.

It carries out the reaction (S)-malate + NAD(+) = pyruvate + CO2 + NADH. The catalysed reaction is oxaloacetate + H(+) = pyruvate + CO2. The chain is NAD-dependent malic enzyme from Pseudomonas aeruginosa (strain UCBPP-PA14).